The chain runs to 67 residues: Penaeidin-4a (67 aa).

An N-terminal signal peptide occupies residues 1-19; sequence MRLVVCLVFLASFALVCQG. Intrachain disulfides connect cysteine 42–cysteine 56, cysteine 45–cysteine 63, and cysteine 57–cysteine 64. Position 66 is an arginine amide (arginine 66).

It belongs to the penaeidin family.

Its subcellular location is the cytoplasmic granule. Antibacterial and antifungal activity. Presents chitin-binding activity. This is Penaeidin-4a from Penaeus vannamei (Whiteleg shrimp).